Reading from the N-terminus, the 95-residue chain is Small ribosomal subunit protein bS21 (95 aa).

The interval 55 to 95 (RKLARKKMQREGLLPMKPKPVFGAGPGAGRGGPGAGARPPR) is disordered. Gly residues predominate over residues 78 to 89 (AGPGAGRGGPGA).

Belongs to the bacterial ribosomal protein bS21 family.

This is Small ribosomal subunit protein bS21 from Nitrobacter hamburgensis (strain DSM 10229 / NCIMB 13809 / X14).